A 701-amino-acid chain; its full sequence is Translation initiation factor IF-2 (701 aa).

Basic and acidic residues predominate over residues lysine 48 to glutamine 62. A disordered region spans residues lysine 48–threonine 123. Low complexity-rich tracts occupy residues glutamine 63 to proline 89 and asparagine 97 to glutamine 109. Over residues proline 110 to proline 119 the composition is skewed to basic and acidic residues. The tr-type G domain occupies glutamate 203 to lysine 372. The interval glycine 212–threonine 219 is G1. A GTP-binding site is contributed by glycine 212 to threonine 219. A G2 region spans residues glycine 237 to histidine 241. Residues aspartate 258–glycine 261 form a G3 region. GTP-binding positions include aspartate 258–histidine 262 and asparagine 312–aspartate 315. Positions asparagine 312 to aspartate 315 are G4. A G5 region spans residues serine 348–leucine 350.

Belongs to the TRAFAC class translation factor GTPase superfamily. Classic translation factor GTPase family. IF-2 subfamily.

Its subcellular location is the cytoplasm. In terms of biological role, one of the essential components for the initiation of protein synthesis. Protects formylmethionyl-tRNA from spontaneous hydrolysis and promotes its binding to the 30S ribosomal subunits. Also involved in the hydrolysis of GTP during the formation of the 70S ribosomal complex. The chain is Translation initiation factor IF-2 from Staphylococcus saprophyticus subsp. saprophyticus (strain ATCC 15305 / DSM 20229 / NCIMB 8711 / NCTC 7292 / S-41).